Consider the following 531-residue polypeptide: Probable inactive beta-glucosidase 25 (531 aa).

A signal peptide spans 1–24 (MALKAILFLGLFLVVIVSPITVYG). A beta-D-glucoside-binding positions include Gln-53 and 202-203 (NE). Glu-203 serves as the catalytic Proton donor. Cysteines 222 and 230 form a disulfide. Residues Phe-348 and 477-478 (EW) contribute to the a beta-D-glucoside site.

This sequence belongs to the glycosyl hydrolase 1 family.

The sequence is that of Probable inactive beta-glucosidase 25 from Arabidopsis thaliana (Mouse-ear cress).